Here is a 261-residue protein sequence, read N- to C-terminus: Cytochrome c oxidase subunit 3 (261 aa).

Residues 1 to 15 (MTRQTHAYHMVNPSP) lie on the Mitochondrial matrix side of the membrane. A helical membrane pass occupies residues 16 to 34 (WPLTGALSALLMTSGLIMW). The Mitochondrial intermembrane segment spans residues 35–40 (FHFNST). A helical transmembrane segment spans residues 41–66 (ILLMLGLTTNMLTMYQWWRDVIREST). The Mitochondrial matrix segment spans residues 67 to 72 (FQGHHT). The helical transmembrane segment at 73–105 (PNVQKGLRYGMILFIISEVLFFTGFFWAFYHSS) threads the bilayer. At 106 to 128 (LAPTPELGGCWPPTGIHPLNPLE) the chain is on the mitochondrial intermembrane side. Residues 129–152 (VPLLNTSVLLASGVSITWAHHSLM) traverse the membrane as a helical segment. The Mitochondrial matrix portion of the chain corresponds to 153–155 (EGN). A helical transmembrane segment spans residues 156–183 (RNHMLQALFITIALGVYFTLLQASEYYE). Residues 184–190 (APFTISD) lie on the Mitochondrial intermembrane side of the membrane. A helical membrane pass occupies residues 191–223 (GVYGSTFFVATGFHGLHVIIGSTFLIVCFFRQL). Topologically, residues 224–232 (KFHFTSNHH) are mitochondrial matrix. Residues 233 to 256 (FGFEAAAWYWHFVDVVWLFLYVSI) form a helical membrane-spanning segment. Over 257-261 (YWWGS) the chain is Mitochondrial intermembrane.

Belongs to the cytochrome c oxidase subunit 3 family. In terms of assembly, component of the cytochrome c oxidase (complex IV, CIV), a multisubunit enzyme composed of 14 subunits. The complex is composed of a catalytic core of 3 subunits MT-CO1, MT-CO2 and MT-CO3, encoded in the mitochondrial DNA, and 11 supernumerary subunits COX4I, COX5A, COX5B, COX6A, COX6B, COX6C, COX7A, COX7B, COX7C, COX8 and NDUFA4, which are encoded in the nuclear genome. The complex exists as a monomer or a dimer and forms supercomplexes (SCs) in the inner mitochondrial membrane with NADH-ubiquinone oxidoreductase (complex I, CI) and ubiquinol-cytochrome c oxidoreductase (cytochrome b-c1 complex, complex III, CIII), resulting in different assemblies (supercomplex SCI(1)III(2)IV(1) and megacomplex MCI(2)III(2)IV(2)).

The protein localises to the mitochondrion inner membrane. It carries out the reaction 4 Fe(II)-[cytochrome c] + O2 + 8 H(+)(in) = 4 Fe(III)-[cytochrome c] + 2 H2O + 4 H(+)(out). Component of the cytochrome c oxidase, the last enzyme in the mitochondrial electron transport chain which drives oxidative phosphorylation. The respiratory chain contains 3 multisubunit complexes succinate dehydrogenase (complex II, CII), ubiquinol-cytochrome c oxidoreductase (cytochrome b-c1 complex, complex III, CIII) and cytochrome c oxidase (complex IV, CIV), that cooperate to transfer electrons derived from NADH and succinate to molecular oxygen, creating an electrochemical gradient over the inner membrane that drives transmembrane transport and the ATP synthase. Cytochrome c oxidase is the component of the respiratory chain that catalyzes the reduction of oxygen to water. Electrons originating from reduced cytochrome c in the intermembrane space (IMS) are transferred via the dinuclear copper A center (CU(A)) of subunit 2 and heme A of subunit 1 to the active site in subunit 1, a binuclear center (BNC) formed by heme A3 and copper B (CU(B)). The BNC reduces molecular oxygen to 2 water molecules using 4 electrons from cytochrome c in the IMS and 4 protons from the mitochondrial matrix. This is Cytochrome c oxidase subunit 3 (MT-CO3) from Eudorcas rufifrons (Red-fronted gazelle).